The following is a 179-amino-acid chain: Putative 5'(3')-deoxyribonucleotidase (179 aa).

The Nucleophile role is filled by aspartate 9. Aspartate 9, aspartate 11, and aspartate 135 together coordinate Mg(2+). Aspartate 11 serves as the catalytic Proton donor.

The protein belongs to the 5'(3')-deoxyribonucleotidase family. Requires Mg(2+) as cofactor.

Dephosphorylates the 5' and 2'(3')-phosphates of deoxyribonucleotides. The sequence is that of Putative 5'(3')-deoxyribonucleotidase from Staphylococcus epidermidis (strain ATCC 35984 / DSM 28319 / BCRC 17069 / CCUG 31568 / BM 3577 / RP62A).